Here is a 145-residue protein sequence, read N- to C-terminus: Large ribosomal subunit protein uL15 (145 aa).

The segment at 20 to 39 is disordered; the sequence is GRVGKHRKHPSGRGNAGGEH.

This sequence belongs to the universal ribosomal protein uL15 family.

In Trypanosoma brucei brucei, this protein is Large ribosomal subunit protein uL15 (RPL27A).